The chain runs to 235 residues: Probable GTP-binding protein EngB (235 aa).

Residues 23 to 219 enclose the EngB-type G domain; it reads QVPEIAFAGR…NDKIIELLGL (197 aa). GTP contacts are provided by residues 31–38, 58–62, 92–95, 159–162, and 193–200; these read GRSNAGKS, GRTQH, DLPG, TKSD, and FTAQMFSA. Mg(2+) contacts are provided by S38 and T60.

Belongs to the TRAFAC class TrmE-Era-EngA-EngB-Septin-like GTPase superfamily. EngB GTPase family. It depends on Mg(2+) as a cofactor.

Its function is as follows. Necessary for normal cell division and for the maintenance of normal septation. This is Probable GTP-binding protein EngB from Janthinobacterium sp. (strain Marseille) (Minibacterium massiliensis).